The primary structure comprises 333 residues: Mycothiol acetyltransferase (333 aa).

2 N-acetyltransferase domains span residues 18–170 (PTLS…LPEP) and 176–333 (VTVR…AAAD). A 1D-myo-inositol 2-(L-cysteinylamino)-2-deoxy-alpha-D-glucopyranoside-binding site is contributed by E46. 98–100 (IVV) is an acetyl-CoA binding site. Residues E203, K242, and E261 each coordinate 1D-myo-inositol 2-(L-cysteinylamino)-2-deoxy-alpha-D-glucopyranoside. Acetyl-CoA contacts are provided by residues 265–267 (VGV) and 272–278 (GGAGLGR). Position 299 (Y299) interacts with 1D-myo-inositol 2-(L-cysteinylamino)-2-deoxy-alpha-D-glucopyranoside. 304 to 309 (NERAVR) serves as a coordination point for acetyl-CoA.

This sequence belongs to the acetyltransferase family. MshD subfamily. As to quaternary structure, monomer.

It carries out the reaction 1D-myo-inositol 2-(L-cysteinylamino)-2-deoxy-alpha-D-glucopyranoside + acetyl-CoA = mycothiol + CoA + H(+). In terms of biological role, catalyzes the transfer of acetyl from acetyl-CoA to desacetylmycothiol (Cys-GlcN-Ins) to form mycothiol. The sequence is that of Mycothiol acetyltransferase from Frankia alni (strain DSM 45986 / CECT 9034 / ACN14a).